The following is a 1555-amino-acid chain: Phospholipid-transporting ATPase DNF1 (1555 aa).

A disordered region spans residues 1–85 (MAPPQEEGGG…SSNNGGSAPR (85 aa)). Topologically, residues 1-134 (MAPPQEEGGG…PKNLWFQFHN (134 aa)) are cytoplasmic. Positions 22-37 (WATRRLTVKSGARKRL) are enriched in basic residues. The segment covering 72–82 (GSISSSNNGGS) has biased composition (low complexity). A helical transmembrane segment spans residues 135–155 (IANIFFLFLVILVIFPIFGGV). N156 is a topological domain (extracellular). A helical membrane pass occupies residues 157–177 (PGLNSVPLIVIITVTAIKDAI). The Cytoplasmic segment spans residues 178 to 491 (EDYRRTILDI…ARIARELNFN (314 aa)). The segment at 257–288 (TRTAPWDPSHRRSVASHTEEIQMTPVPSPVPH) is disordered. The chain crosses the membrane as a helical span at residues 492-512 (VICNFGILLIMCLIAAIANGI). Residues 513 to 537 (AWGKTDASLAWFEYGSIGGTPALTG) lie on the Extracellular side of the membrane. A helical transmembrane segment spans residues 538-558 (FITFWAAVIVFQNLVPISLYI). The Cytoplasmic portion of the chain corresponds to 559–1123 (SLEIVRTLQA…TISNFFYKNM (565 aa)). D606 functions as the 4-aspartylphosphate intermediate in the catalytic mechanism. Residues D606, K607, T608, E740, F781, S783, K786, K804, R839, T840, T919, G920, D921, R1031, and K1037 each contribute to the ATP site. D606 is a Mg(2+) binding site. T608 serves as a coordination point for Mg(2+). A Mg(2+)-binding site is contributed by D1057. Positions 1060 and 1061 each coordinate ATP. A Mg(2+)-binding site is contributed by D1061. The helical transmembrane segment at 1124-1144 (IWTWSIFWYQCYCNFDIAYIF) threads the bilayer. At 1145-1146 (EY) the chain is on the extracellular side. Residues 1147–1167 (TYILMFNLFFTSVPVILMGVL) traverse the membrane as a helical segment. Residues 1168–1200 (DQDVSDTVSLAVPQLYRRGIERKEWTQTKFWLY) lie on the Cytoplasmic side of the membrane. A helical transmembrane segment spans residues 1201–1221 (MIDGVYQSVMSFFIPFIFVVL). At 1222 to 1237 (TPTAAGNGLDVSERTR) the chain is on the extracellular side. Residues 1238–1258 (LGAYIAHPAVITINGYILINT) traverse the membrane as a helical segment. Residues 1259-1262 (YRWD) lie on the Cytoplasmic side of the membrane. Residues 1263–1283 (WLMLLSIVLSDVFIFFWTGVY) form a helical membrane-spanning segment. Over 1284–1302 (TATTYSAGFYQAAPQVYQE) the chain is Extracellular. A helical transmembrane segment spans residues 1303–1323 (LTFWMCLIVTPALCLLPRLVV). R1320 serves as a coordination point for a 1,2-diacyl-sn-glycero-3-phospho-L-serine. Over 1324–1555 (KCIQKQRFPY…EGEPPREPPM (232 aa)) the chain is Cytoplasmic. 2 disordered regions span residues 1364–1456 (VEGE…ERTR) and 1489–1555 (ESTH…EPPM). The span at 1406 to 1432 (ATHNTRAQNGSDGTTYIMQSRTSTELQ) shows a compositional bias: polar residues. 2 stretches are compositionally biased toward basic and acidic residues: residues 1436–1456 (PFDR…ERTR) and 1540–1555 (KSID…EPPM).

This sequence belongs to the cation transport ATPase (P-type) (TC 3.A.3) family. Type IV subfamily. Component of a flippase complex consisting of DNF1 and CDC50. Interacts with CDC50; the interaction is direct. The cofactor is Mg(2+).

The protein localises to the cell membrane. The protein resides in the endosome membrane. Its subcellular location is the golgi apparatus. It is found in the trans-Golgi network membrane. The catalysed reaction is ATP + H2O + phospholipidSide 1 = ADP + phosphate + phospholipidSide 2.. It catalyses the reaction a 1,2-diacyl-sn-glycero-3-phosphoethanolamine(out) + ATP + H2O = a 1,2-diacyl-sn-glycero-3-phosphoethanolamine(in) + ADP + phosphate + H(+). It carries out the reaction a 1,2-diacyl-sn-glycero-3-phosphocholine(out) + ATP + H2O = a 1,2-diacyl-sn-glycero-3-phosphocholine(in) + ADP + phosphate + H(+). The enzyme catalyses a beta-D-glucosyl-(1&lt;-&gt;1')-N-acylsphing-4-enine(out) + ATP + H2O = a beta-D-glucosyl-(1&lt;-&gt;1')-N-acylsphing-4-enine(in) + ADP + phosphate + H(+). The catalysed reaction is a 1,2-diacyl-sn-glycero-3-phospho-L-serine(out) + ATP + H2O = a 1,2-diacyl-sn-glycero-3-phospho-L-serine(in) + ADP + phosphate + H(+). In terms of biological role, catalytic component of a P4-ATPase flippase complex which catalyzes the hydrolysis of ATP coupled to the transport of phosphatidylcholine and phosphatidylserine from the lumenal to the cytosolic leaflet of membranes and ensures the maintenance of asymmetric distribution of phospholipids. May also transport glucosylceramide and phosphatidylethanolamine. The polypeptide is Phospholipid-transporting ATPase DNF1 (Chaetomium thermophilum (strain DSM 1495 / CBS 144.50 / IMI 039719) (Thermochaetoides thermophila)).